The chain runs to 192 residues: MLRYRGVSIWTVRVKAKKNVVLVGPMGTGKTTIGKLLAKELQFEFVDSDREIEARCGADIPWIFDVEGEVGFRGREKSVIADLSQRDAVVIATGGGAVVDPDNQIALKENGFIVYLHTSVEQQYQRTRKDRKRPLLRSEDPLSVLKKLMSVREPIYRSIADLIISTDSKRPKGVVRDIVKTLRASREETVER.

27–32 (GTGKTT) is a binding site for ATP. Position 31 (threonine 31) interacts with Mg(2+). Substrate is bound by residues aspartate 49, arginine 73, and glycine 95. Arginine 133 contacts ATP. Arginine 152 lines the substrate pocket.

This sequence belongs to the shikimate kinase family. Monomer. Mg(2+) serves as cofactor.

The protein resides in the cytoplasm. The catalysed reaction is shikimate + ATP = 3-phosphoshikimate + ADP + H(+). It functions in the pathway metabolic intermediate biosynthesis; chorismate biosynthesis; chorismate from D-erythrose 4-phosphate and phosphoenolpyruvate: step 5/7. Functionally, catalyzes the specific phosphorylation of the 3-hydroxyl group of shikimic acid using ATP as a cosubstrate. This is Shikimate kinase from Hahella chejuensis (strain KCTC 2396).